The sequence spans 1226 residues: Methionine synthase (1226 aa).

The Hcy-binding domain maps to 6 to 326; sequence RAQIEAQLKQ…EHIRHMAMAV (321 aa). C248, C311, and C312 together coordinate Zn(2+). A Pterin-binding domain is found at 357 to 618; that stretch reads FVNVGERTNV…VPEKLREAVE (262 aa). A B12-binding N-terminal domain is found at 651 to 745; it reads SALEWRTWSV…FINASKQVGS (95 aa). Methylcob(III)alamin is bound by residues E695, 757-761, H760, S805, T809, and A861; that span reads GDVHD. The B12-binding domain occupies 747–882; it reads NGKILLATVK…SDELRPAFVE (136 aa). One can recognise an AdoMet activation domain in the interval 898–1226; it reads KKPRTKPVTL…EKWLGPNING (329 aa). S-adenosyl-L-methionine-binding positions include D948, R1136, and 1191-1192; that span reads YF.

The protein belongs to the vitamin-B12 dependent methionine synthase family. Methylcob(III)alamin is required as a cofactor. Zn(2+) serves as cofactor.

The enzyme catalyses (6S)-5-methyl-5,6,7,8-tetrahydrofolate + L-homocysteine = (6S)-5,6,7,8-tetrahydrofolate + L-methionine. The protein operates within amino-acid biosynthesis; L-methionine biosynthesis via de novo pathway; L-methionine from L-homocysteine (MetH route): step 1/1. Its function is as follows. Catalyzes the transfer of a methyl group from methyl-cobalamin to homocysteine, yielding enzyme-bound cob(I)alamin and methionine. Subsequently, remethylates the cofactor using methyltetrahydrofolate. This Vibrio vulnificus (strain YJ016) protein is Methionine synthase (metH).